A 547-amino-acid polypeptide reads, in one-letter code: Alpha-humulene/(-)-(E)-beta-caryophyllene synthase (547 aa).

Residues Arg262, Asp299, Asp303, Arg442, and Asp445 each contribute to the (2E,6E)-farnesyl diphosphate site. Residues Asp299 and Asp303 each coordinate Mg(2+). The short motif at 299–303 is the DDXXD motif element; the sequence is DDMYD. The Mg(2+) site is built by Asp445, Asp446, Ser449, and Glu453.

Belongs to the terpene synthase family. Tpsa subfamily. In terms of assembly, monomer. Mg(2+) is required as a cofactor. The cofactor is Mn(2+). In terms of tissue distribution, expressed exclusively in flowers. Expressed in the flower stigmata and also detected in the mesocarp cell layers of the silique wall.

The protein localises to the cytoplasm. It carries out the reaction (2E,6E)-farnesyl diphosphate = (-)-(E)-beta-caryophyllene + diphosphate. It catalyses the reaction (2E,6E)-farnesyl diphosphate = alpha-copaene + diphosphate. The catalysed reaction is (2E,6E)-farnesyl diphosphate = alpha-humulene + diphosphate. The enzyme catalyses (2E,6E)-farnesyl diphosphate = (1S,2S,4R)-beta-elemene + diphosphate. Its pathway is secondary metabolite biosynthesis; terpenoid biosynthesis. Its function is as follows. Involved in sesquiterpene (C15) biosynthesis. The major products are beta-caryophyllene and alpha-humulene. Does not convert geranyl diphosphate (GPP) to any monoterpenes. This chain is Alpha-humulene/(-)-(E)-beta-caryophyllene synthase, found in Arabidopsis thaliana (Mouse-ear cress).